Consider the following 232-residue polypeptide: MKAITVLSGGLDSTVVTLIAKDLGYEVTAITFNYGQRAAKREINSAKKICEILGIEHIVVDLPFVKQFGKSSLITEKEIPTLKMEELDSEKAYETMKAVWVPARNVIMFGIASGFAEALDAEKIFIGINKEEGVTFPDNTIEFVEAFNKVLEYGTLNKVKIEAPLYDKTKEEIVKLGAELEKKLGVEVLKYSYSCYHDNGEDFLHCGKCESCMRRKRAFLMAGVEDKTKYIE.

7-17 (LSGGLDSTVVT) serves as a coordination point for ATP. Zn(2+)-binding residues include Cys-195, Cys-206, Cys-209, and Cys-212.

This sequence belongs to the QueC family. The cofactor is Zn(2+).

It carries out the reaction 7-carboxy-7-deazaguanine + NH4(+) + ATP = 7-cyano-7-deazaguanine + ADP + phosphate + H2O + H(+). The protein operates within purine metabolism; 7-cyano-7-deazaguanine biosynthesis. In terms of biological role, catalyzes the ATP-dependent conversion of 7-carboxy-7-deazaguanine (CDG) to 7-cyano-7-deazaguanine (preQ(0)). This Methanocaldococcus jannaschii (strain ATCC 43067 / DSM 2661 / JAL-1 / JCM 10045 / NBRC 100440) (Methanococcus jannaschii) protein is 7-cyano-7-deazaguanine synthase.